Reading from the N-terminus, the 161-residue chain is SsrA-binding protein (161 aa).

This sequence belongs to the SmpB family.

The protein localises to the cytoplasm. In terms of biological role, required for rescue of stalled ribosomes mediated by trans-translation. Binds to transfer-messenger RNA (tmRNA), required for stable association of tmRNA with ribosomes. tmRNA and SmpB together mimic tRNA shape, replacing the anticodon stem-loop with SmpB. tmRNA is encoded by the ssrA gene; the 2 termini fold to resemble tRNA(Ala) and it encodes a 'tag peptide', a short internal open reading frame. During trans-translation Ala-aminoacylated tmRNA acts like a tRNA, entering the A-site of stalled ribosomes, displacing the stalled mRNA. The ribosome then switches to translate the ORF on the tmRNA; the nascent peptide is terminated with the 'tag peptide' encoded by the tmRNA and targeted for degradation. The ribosome is freed to recommence translation, which seems to be the essential function of trans-translation. The sequence is that of SsrA-binding protein from Haemophilus influenzae (strain 86-028NP).